The primary structure comprises 975 residues: Protein cramped (975 aa).

5 disordered regions span residues 1–37 (MEEL…GGGA), 71–111 (QKMK…GSGK), 318–346 (AIFP…PSVA), 403–450 (PVAA…LMKM), and 809–844 (PIDR…QEPG). Over residues 7–20 (QPPPPPPLPPPPSS) the composition is skewed to pro residues. Residues 86-98 (SEREPNKKEEKAA) show a composition bias toward basic and acidic residues. Residues 100 to 111 (KTPSQLKTGSGK) show a composition bias toward polar residues. Positions 109-173 (SGKTTWTNVE…HYYQTYHKIC (65 aa)) constitute an SANT domain. The span at 410–425 (LRTESGSEKRSPETKK) shows a compositional bias: basic and acidic residues. Residues 815–833 (GTSSGGISSSGSKPDSSMG) are compositionally biased toward low complexity.

This sequence belongs to the cramped family.

The protein resides in the nucleus. Functionally, polycomb group (Pc-G) genes are needed to maintain expression patterns of the homeotic selector genes of the Antennapedia (Antp-C) and Bithorax (Bx-C) complexes, and hence for the maintenance of segmental determination. Can act as a modifier of position effect variegation (PEV). The polypeptide is Protein cramped (crm) (Drosophila sechellia (Fruit fly)).